Reading from the N-terminus, the 119-residue chain is Large ribosomal subunit protein bL20c (119 aa).

Belongs to the bacterial ribosomal protein bL20 family.

It localises to the plastid. The protein resides in the chloroplast. Functionally, binds directly to 23S ribosomal RNA and is necessary for the in vitro assembly process of the 50S ribosomal subunit. It is not involved in the protein synthesizing functions of that subunit. This Saccharum hybrid (Sugarcane) protein is Large ribosomal subunit protein bL20c.